A 481-amino-acid polypeptide reads, in one-letter code: Cysteine--tRNA ligase (481 aa).

Cysteine 29 provides a ligand contact to Zn(2+). A 'HIGH' region motif is present at residues 31 to 41 (PTVYDYSHLGH). Zn(2+) contacts are provided by cysteine 210, histidine 235, and glutamate 239. The 'KMSKS' region motif lies at 272-276 (KMSKS). Residue lysine 275 participates in ATP binding.

The protein belongs to the class-I aminoacyl-tRNA synthetase family. Monomer. Zn(2+) is required as a cofactor.

Its subcellular location is the cytoplasm. It catalyses the reaction tRNA(Cys) + L-cysteine + ATP = L-cysteinyl-tRNA(Cys) + AMP + diphosphate. In Anaeromyxobacter sp. (strain K), this protein is Cysteine--tRNA ligase.